The primary structure comprises 216 residues: GTP cyclohydrolase 1 (216 aa).

Positions 108, 111, and 179 each coordinate Zn(2+).

The protein belongs to the GTP cyclohydrolase I family. Homomer.

The catalysed reaction is GTP + H2O = 7,8-dihydroneopterin 3'-triphosphate + formate + H(+). It functions in the pathway cofactor biosynthesis; 7,8-dihydroneopterin triphosphate biosynthesis; 7,8-dihydroneopterin triphosphate from GTP: step 1/1. The sequence is that of GTP cyclohydrolase 1 from Shewanella baltica (strain OS223).